A 92-amino-acid polypeptide reads, in one-letter code: 10 kDa late embryogenesis abundant protein (92 aa).

A compositionally biased stretch (polar residues) spans methionine 1 to arginine 10. The interval methionine 1–aspartate 92 is disordered. 2 stretches are compositionally biased toward basic and acidic residues: residues lysine 11–lysine 26 and lysine 38–lysine 71.

This sequence belongs to the small hydrophilic plant seed protein family. In terms of tissue distribution, maximally expressed in dry seeds. Also present in mid-maturation embryos.

Its function is as follows. LEA proteins are late embryonic proteins abundant in higher plant seed embryos. They may play an essential role in seed survival and in controlling water exchanges during seed desiccation and imbibition. The protein is 10 kDa late embryogenesis abundant protein of Helianthus annuus (Common sunflower).